The following is a 614-amino-acid chain: 1-deoxy-D-xylulose-5-phosphate synthase (614 aa).

Thiamine diphosphate is bound by residues His-74 and 115 to 117 (GHS). Asp-146 contacts Mg(2+). Residues 147 to 148 (GA), Asn-175, Tyr-282, and Glu-363 contribute to the thiamine diphosphate site. Residue Asn-175 coordinates Mg(2+).

It belongs to the transketolase family. DXPS subfamily. Homodimer. Requires Mg(2+) as cofactor. The cofactor is thiamine diphosphate.

It carries out the reaction D-glyceraldehyde 3-phosphate + pyruvate + H(+) = 1-deoxy-D-xylulose 5-phosphate + CO2. Its pathway is metabolic intermediate biosynthesis; 1-deoxy-D-xylulose 5-phosphate biosynthesis; 1-deoxy-D-xylulose 5-phosphate from D-glyceraldehyde 3-phosphate and pyruvate: step 1/1. Catalyzes the acyloin condensation reaction between C atoms 2 and 3 of pyruvate and glyceraldehyde 3-phosphate to yield 1-deoxy-D-xylulose-5-phosphate (DXP). This is 1-deoxy-D-xylulose-5-phosphate synthase from Methylobacillus flagellatus (strain ATCC 51484 / DSM 6875 / VKM B-1610 / KT).